The following is a 287-amino-acid chain: uncharacterized protein (287 aa).

GTP contacts are provided by residues Gly-43–Ser-50, Asp-90–Gly-93, and Asp-156–Glu-159. A G domain is found at Gly-48–Gln-138.

This sequence to E.coli YfjP and YeeP.

This is an uncharacterized protein from Escherichia coli (strain K12).